The primary structure comprises 1708 residues: MEAQQFIKAPGITTAIEQAALAAANSALANAVVVRPFLSRVQTEILINLMQPRQLVFRPEVLWNHPIQRVIHNELEQYCRARAGRCLEVGAHPRSINDNPNVLHRCFLRPVGRDVQRWYSAPTRGPAANCRRSALRGLPPVDRTYCFDGFSRCAFAAETGVALYSLHDLWPADVAEAMARHGMTRLYAALHLPPEVLLPPGTYHTTSYLLIHDGDRAVVTYEGDTSAGYNHDVSILRAWIRTTKIVGDHPLVIERVRAIGCHFVLLLTAAPEPSPMPYVPYPRSTEVYVRSIFGPGGSPSLFPSACSTKSTFHAVPVHIWDRLMLFGATLDDQAFCCSRLMTYLRGISYKVTVGALVANEGWNASEDALTAVITAAYLTICHQRYLRTQAISKGMRRLEVEHAQKFITRLYSWLFEKSGRDYIPGRQLQFYAQCRRWLSAGFHLDPRVLVFDESVPCRCRTFLKKVAGKFCCFMRWLGQECTCFLEPAEGLVGDYGHDNEAYEGSEVDPAEPAHLDVSGTYAVHGRQLEALYRALNVPHDIAARASRLTATVELTASPDRLECRTVLGNKTFRTTVVDGAHLEANGPEQYVLSFDASRQSMGAGSHSLTYELTPAGLQVRISSNGLDCTATFPPGGAPSAAPGEVAAFCSALYRYNRFTQRHSLTGGLWLHPEGLLGIFPPFSPGHIWESANPFCGEGTLYTRTWSTSGFSSDFSPPEAAAPVLAAAPGLPHPTPPVSDIWVLPPPSEESQVDAASVPPAPEPAGLPSSIVLTLPPPLPPVRKPPTPPPSRTRRLLYTYPDGAKVYAGSLFESDCNWLVNASNPGHRPGGGLCHAFYQRFPEAFYPTEFIMREGLAAYTLTPRPIIHAVAPDYRVEQNPKRLEAAYRETCSRRGTAAYPLLGSGIYQVPVSLSFDAWERNHRPGDELYLTEPAAAWFEANKPAQPALTITEDTARTANLALEIDAATDVGRACAGCTISPGIVHYQFTAGVPGSGKSRSIQQGDVDVVVVPTRELRNSWRRRGFAAFTPHTAARVTIGRRVVIDEAPSLPPHLLLLHMQRASSVHLLGDPNQIPAIDFEHAGLVPAIRPELAPTSWWHVTHRCPADVCELIRGAYPKIQTTSRVLRSLFWNEPAIGQKLVFTQAAKAANPGAITVHEAQGATFTETTIIATADARGLIQSSRAHAIVALTRHTEKCVILDAPGLLREVGISDVIVNNFFLAGGEVGHHRPSVIPRGNPDQNLGTLQAFPPSCQISAYHQLAEELGHRPAPVAAVLPPCPELEQGLLYMPQELTVSDSVLVFELTDIVHCRMAAPSQRKAVLSTLVGRYGRRTKLYEAAHSDVRESLARFIPTIGPVQATTCELYELVEAMVEKGQDGSAVLELDLCNRDVSRITFFQKDCNKFTTGETIAHGKVGQGISAWSKTFCALFGPWFRAIEKEILALLPPNIFYGDAYEESVFAAAVSGAGSCMVFENDFSEFDSTQNNFSLGLECVVMEECGMPQWLIRLYHLVRSAWILQAPKESLKGFWKKHSGEPGTLLWNTVWNMAIIAHCYEFRDFRVAAFKGDDSVVLCSDYRQSRNAAALIAGCGLKLKVDYRPIGLYAGVVVAPGLGTLPDVVRFAGRLSEKNWGPGPERAEQLRLAVCDFLRGLTNVAQVCVDVVSRVYGVSPGLVHNLIGMLQTIADGKAHFTETIKPVLDLTNSIIQRVE.

The region spanning 56–240 (VFRPEVLWNH…HDVSILRAWI (185 aa)) is the Alphavirus-like MT domain. Residues 60–240 (EVLWNHPIQR…HDVSILRAWI (181 aa)) are methyltransferase. Residues 241 to 439 (RTTKIVGDHP…FYAQCRRWLS (199 aa)) form a Y-domain region. A disulfide bond links C434 and C481. Residues 442–509 (FHLDPRVLVF…EAYEGSEVDP (68 aa)) form a putative protease region. Residues 510–691 (AEPAHLDVSG…FSPGHIWESA (182 aa)) are zinc-binding. H671, E673, and H686 together coordinate Zn(2+). The interval 714–793 (FSPPEAAAPV…PPTPPPSRTR (80 aa)) is hinge. Residues 790-936 (SRTRRLLYTY…LYLTEPAAAW (147 aa)) enclose the Macro domain. The X-domain stretch occupies residues 800–957 (PDGAKVYAGS…TITEDTARTA (158 aa)). In terms of domain architecture, (+)RNA virus helicase ATP-binding spans 949-1097 (ITEDTARTAN…RPELAPTSWW (149 aa)). Positions 975–1219 (GCTISPGIVH…ISDVIVNNFF (245 aa)) are NTPase/helicase. 990 to 997 (GVPGSGKS) is a binding site for ATP. The 134-residue stretch at 1098–1231 (HVTHRCPADV…GGEVGHHRPS (134 aa)) folds into the (+)RNA virus helicase C-terminal domain. The tract at residues 1222-1708 (GGEVGHHRPS…LTNSIIQRVE (487 aa)) is RNA-directed RNA polymerase. Residues 1469-1580 (CMVFENDFSE…LCSDYRQSRN (112 aa)) form the RdRp catalytic domain.

This sequence belongs to the hepevirus non-structural polyprotein family. The protease domain interacts with host EIF2AK4 (via C-terminus); this interaction inhibits dimerization of EIF2AK4 and prevents EIF2AK4-mediated phosphorylation of host EIF2A. Requires Mg(2+) as cofactor. ORF1 polyprotein does not seem to be processed into distinct enzymatic domains by a viral protease belonging to ORF1, but could be processed by a host serine protease like thrombin.

The protein localises to the host cytoplasm. It localises to the host perinuclear region. The enzyme catalyses RNA(n) + a ribonucleoside 5'-triphosphate = RNA(n+1) + diphosphate. It carries out the reaction GTP + S-adenosyl-L-methionine = N(7)-methyl-GTP + S-adenosyl-L-homocysteine. With respect to regulation, putative protease: Inhibited by chymostatin. Methyltransferase: Displays a capping enzyme activity. This function is necessary since all viral RNAs are synthesized in the cytoplasm, and host capping enzymes are restricted to the nucleus. The enzymatic reaction involves a covalent link between 7-methyl-GMP and the methyltransferase, whereas eukaryotic capping enzymes form a covalent complex only with GMP. Methyltransferase catalyzes transfer of a methyl group from S-adenosylmethionine to GTP and GDP to yield m(7)GTP or m(7)GDP. GDP is a better substrate than GTP. This enzyme also displays guanylyltransferase activity to form a covalent complex, methyltransferase-m(7)GMP, from which 7-methyl-GMP is transferred to the mRNA to create the cap structure. Its function is as follows. Y-domain: Indispensable for virus replication. Functionally, putative protease: The putative protease domain although necessary for replication of the virus may not be a protease but rather a structural Zn(2+)-binding domain. Inhibits induction of IFN-beta by MDA5 and RIG-I pathways and down-regulates the expression of MDA5. In terms of biological role, NTPase/helicase: Multi-functional protein that exhibits NTPase and RNA unwinding activities. Hydrolyzes all NTPs efficiently and unwinds RNA duplexes containing 5' overhangs. Possesses a sequence independent RNA-5'-triphosphatase (RTPase) activity suggestive of its role in forming viral cap structure. Also participates in viral genome replication, RNA translocation and genome packaging/unpackaging. RNA-directed RNA polymerase: Plays an essential role in the virus replication. Binds to the 3'-end of the genomic RNA to initiate viral replication. The polypeptide is Non-structural polyprotein pORF1 (Bandicota bengalensis (lesser bandicoot rat)).